A 460-amino-acid chain; its full sequence is Dynactin subunit 4 (460 aa).

Residue Ala2 is modified to N-acetylalanine. Residues 152-172 (QQLAQKEKVERDRKKLARRRN) adopt a coiled-coil conformation. At Ser196 the chain carries Phosphoserine. Residue Lys215 forms a Glycyl lysine isopeptide (Lys-Gly) (interchain with G-Cter in SUMO2) linkage. Thr407 carries the post-translational modification Phosphothreonine.

It belongs to the dynactin subunit 4 family. As to quaternary structure, subunit of dynactin, a multiprotein complex part of a tripartite complex with dynein and a adapter, such as BICDL1, BICD2 or HOOK3. The dynactin complex is built around ACTR1A/ACTB filament and consists of an actin-related filament composed of a shoulder domain, a pointed end and a barbed end. Its length is defined by its flexible shoulder domain. The soulder is composed of 2 DCTN1 subunits, 4 DCTN2 and 2 DCTN3. The 4 DCNT2 (via N-terminus) bind the ACTR1A filament and act as molecular rulers to determine the length. The pointed end is important for binding dynein-dynactin cargo adapters. Consists of 4 subunits: ACTR10, DCNT4, DCTN5 and DCTN6. The barbed end is composed of a CAPZA1:CAPZB heterodimers, which binds ACTR1A/ACTB filament and dynactin and stabilizes dynactin. Interacts with ATP7B, but not ATP7A, in a copper-dependent manner. Interacts with ANK2; this interaction is required for localization at costameres. Interacts with N4BP2L1.

It is found in the cytoplasm. Its subcellular location is the cytoskeleton. The protein localises to the microtubule organizing center. It localises to the centrosome. The protein resides in the stress fiber. It is found in the cell cortex. Its subcellular location is the myofibril. The protein localises to the sarcomere. Functionally, part of the dynactin complex that activates the molecular motor dynein for ultra-processive transport along microtubules. This chain is Dynactin subunit 4, found in Homo sapiens (Human).